A 158-amino-acid chain; its full sequence is Large ribosomal subunit protein uL30 (158 aa).

It belongs to the universal ribosomal protein uL30 family. In terms of assembly, part of the 50S ribosomal subunit.

The chain is Large ribosomal subunit protein uL30 from Saccharolobus islandicus (strain Y.G.57.14 / Yellowstone #1) (Sulfolobus islandicus).